A 273-amino-acid chain; its full sequence is Large ribosomal subunit protein uL2 (273 aa).

Disordered regions lie at residues 28-55 (TPEKSLTRGKPAKAGRGAGGRISVRHRG) and 222-273 (GMAM…SKRK). Residues 255–273 (YKTRKKRRVSDRFIVSKRK) show a composition bias toward basic residues.

Belongs to the universal ribosomal protein uL2 family. In terms of assembly, part of the 50S ribosomal subunit. Forms a bridge to the 30S subunit in the 70S ribosome.

Functionally, one of the primary rRNA binding proteins. Required for association of the 30S and 50S subunits to form the 70S ribosome, for tRNA binding and peptide bond formation. It has been suggested to have peptidyltransferase activity; this is somewhat controversial. Makes several contacts with the 16S rRNA in the 70S ribosome. This Treponema pallidum (strain Nichols) protein is Large ribosomal subunit protein uL2.